The primary structure comprises 484 residues: MSIKGDIGVIGLAVMGQNLILNMNDNGFKVVAYNRTASKVDEFLAGEAKDTNIIGAYSLEDLAAKLEKPRKIMLMVRAGEVVDQFIDALLPHLEAGDIIIDGGNSNYPDTNRRTITLAEKGIRFIGTGVSGGEEGARHGPSIMPGGNEEAWPFVKPILQAISAKTDKDEPCCDWVGKEGAGHFVKMVHNGIEYGDMQLICEAYQFLKDGLGLNYEEMHAIFADWKNTELDSYLIDITADILAYKDADGEPLVEKILDTAGQKGTGKWTGINALDFGIPLTLITEAVFARCVSAFKDQRVAVSQLFNKTITPISDDKKEWIEAVRKALLASKIISYAQGFMLIREASENFEWNINYGATALLWREGCIIRSAFLGNIRDAYEANPGLVFLGSDPYFQNILQSAMADWRKVVAKSIEIGIPMPCMAAAITFLDGYSSEHLPANLLQAQRDYFGAHTYERTDKPRCSFFHTNWTGRGGNTASTTYDV.

NADP(+) is bound by residues 11 to 16 (GLAVMG), 34 to 36 (NRT), 76 to 78 (VRA), and Asn-104. Substrate is bound by residues Asn-104 and 130–132 (SGG). Lys-185 (proton acceptor) is an active-site residue. 188–189 (HN) is a substrate binding site. The active-site Proton donor is the Glu-192. The substrate site is built by Tyr-193, Lys-262, Arg-289, Arg-447, and His-453.

This sequence belongs to the 6-phosphogluconate dehydrogenase family. Homodimer.

It carries out the reaction 6-phospho-D-gluconate + NADP(+) = D-ribulose 5-phosphate + CO2 + NADPH. Its pathway is carbohydrate degradation; pentose phosphate pathway; D-ribulose 5-phosphate from D-glucose 6-phosphate (oxidative stage): step 3/3. Catalyzes the oxidative decarboxylation of 6-phosphogluconate to ribulose 5-phosphate and CO(2), with concomitant reduction of NADP to NADPH. The chain is 6-phosphogluconate dehydrogenase, decarboxylating (gnd) from Haemophilus ducreyi (strain 35000HP / ATCC 700724).